The primary structure comprises 131 residues: Small ribosomal subunit protein uS8 (131 aa).

The protein belongs to the universal ribosomal protein uS8 family. In terms of assembly, part of the 30S ribosomal subunit. Contacts proteins S5 and S12.

In terms of biological role, one of the primary rRNA binding proteins, it binds directly to 16S rRNA central domain where it helps coordinate assembly of the platform of the 30S subunit. This chain is Small ribosomal subunit protein uS8, found in Finegoldia magna (strain ATCC 29328 / DSM 20472 / WAL 2508) (Peptostreptococcus magnus).